Consider the following 182-residue polypeptide: Urease accessory protein UreE (182 aa).

Residues 128–182 (PRTEPFRPEGGAYGHGRTLGHDHGPAQGHGHDHPHVHVHISHKPDEDETPDADPA) form a disordered region. Basic and acidic residues predominate over residues 146-162 (LGHDHGPAQGHGHDHPH). The segment covering 173-182 (EDETPDADPA) has biased composition (acidic residues).

It belongs to the UreE family.

The protein resides in the cytoplasm. Its function is as follows. Involved in urease metallocenter assembly. Binds nickel. Probably functions as a nickel donor during metallocenter assembly. In Cereibacter sphaeroides (strain ATCC 17023 / DSM 158 / JCM 6121 / CCUG 31486 / LMG 2827 / NBRC 12203 / NCIMB 8253 / ATH 2.4.1.) (Rhodobacter sphaeroides), this protein is Urease accessory protein UreE.